The following is a 640-amino-acid chain: Calpain-5 (640 aa).

The 318-residue stretch at 26-343 (LFEDPLFPAT…FTDIIKCRLI (318 aa)) folds into the Calpain catalytic domain. Active-site residues include C81, H252, and N284. Positions 344–496 (NTSYLSIHKT…VFTDVPSNCR (153 aa)) are domain III. A C2 domain is found at 499–617 (RLDEPPRTCW…HTLHLQDRSS (119 aa)).

The protein belongs to the peptidase C2 family.

In terms of biological role, calcium-regulated non-lysosomal thiol-protease. The chain is Calpain-5 (Capn5) from Mus musculus (Mouse).